A 158-amino-acid chain; its full sequence is SsrA-binding protein (158 aa).

The protein belongs to the SmpB family.

Its subcellular location is the cytoplasm. In terms of biological role, required for rescue of stalled ribosomes mediated by trans-translation. Binds to transfer-messenger RNA (tmRNA), required for stable association of tmRNA with ribosomes. tmRNA and SmpB together mimic tRNA shape, replacing the anticodon stem-loop with SmpB. tmRNA is encoded by the ssrA gene; the 2 termini fold to resemble tRNA(Ala) and it encodes a 'tag peptide', a short internal open reading frame. During trans-translation Ala-aminoacylated tmRNA acts like a tRNA, entering the A-site of stalled ribosomes, displacing the stalled mRNA. The ribosome then switches to translate the ORF on the tmRNA; the nascent peptide is terminated with the 'tag peptide' encoded by the tmRNA and targeted for degradation. The ribosome is freed to recommence translation, which seems to be the essential function of trans-translation. The chain is SsrA-binding protein from Buchnera aphidicola subsp. Baizongia pistaciae (strain Bp).